The chain runs to 512 residues: Inositol-3-phosphate synthase (512 aa).

NAD(+)-binding residues include Gly72, Gly73, Asn74, Asn75, Asp145, Ile182, Gln192, Arg195, Thr232, Gly233, Asn234, Thr235, Gly283, Ser284, Asp308, Ser311, Asn342, Asn343, Asp344, Lys357, Gly395, Asp396, Asp424, and Ser425.

Belongs to the myo-inositol 1-phosphate synthase family. NAD(+) serves as cofactor.

The protein localises to the cytoplasm. The protein resides in the cytosol. Its subcellular location is the nucleus. The enzyme catalyses D-glucose 6-phosphate = 1D-myo-inositol 3-phosphate. It functions in the pathway polyol metabolism; myo-inositol biosynthesis; myo-inositol from D-glucose 6-phosphate: step 1/2. Key enzyme in myo-inositol biosynthesis pathway that catalyzes the conversion of glucose 6-phosphate to 1-myo-inositol 1-phosphate in a NAD-dependent manner. This Mesembryanthemum crystallinum (Common ice plant) protein is Inositol-3-phosphate synthase.